Consider the following 161-residue polypeptide: 2-C-methyl-D-erythritol 2,4-cyclodiphosphate synthase (161 aa).

Asp-11 and His-13 together coordinate a divalent metal cation. Residues 11–13 (DIH) and 37–38 (HS) each bind 4-CDP-2-C-methyl-D-erythritol 2-phosphate. His-45 provides a ligand contact to a divalent metal cation. 4-CDP-2-C-methyl-D-erythritol 2-phosphate-binding positions include 59–61 (DIG), 135–138 (TTNE), and Arg-145.

It belongs to the IspF family. Homotrimer. Requires a divalent metal cation as cofactor.

It carries out the reaction 4-CDP-2-C-methyl-D-erythritol 2-phosphate = 2-C-methyl-D-erythritol 2,4-cyclic diphosphate + CMP. Its pathway is isoprenoid biosynthesis; isopentenyl diphosphate biosynthesis via DXP pathway; isopentenyl diphosphate from 1-deoxy-D-xylulose 5-phosphate: step 4/6. Its function is as follows. Involved in the biosynthesis of isopentenyl diphosphate (IPP) and dimethylallyl diphosphate (DMAPP), two major building blocks of isoprenoid compounds. Catalyzes the conversion of 4-diphosphocytidyl-2-C-methyl-D-erythritol 2-phosphate (CDP-ME2P) to 2-C-methyl-D-erythritol 2,4-cyclodiphosphate (ME-CPP) with a corresponding release of cytidine 5-monophosphate (CMP). The sequence is that of 2-C-methyl-D-erythritol 2,4-cyclodiphosphate synthase from Cyanothece sp. (strain PCC 7425 / ATCC 29141).